A 444-amino-acid polypeptide reads, in one-letter code: Acyl-CoA 6-desaturase (444 aa).

At 1–131 (MGKGGNQGEG…DMNLFKTNHV (131 aa)) the chain is on the cytoplasmic side. The Cytochrome b5 heme-binding domain occupies 18–95 (MPTFSWEEIQ…LKPLLIGELA (78 aa)). A helical transmembrane segment spans residues 132–152 (FFLLLLAHIIALESIAWFTVF). At 153-157 (YFGNG) the chain is on the lumenal side. The chain crosses the membrane as a helical span at residues 158–178 (WIPTLITAFVLATSQAQAGWL). Over 179 to 264 (QHDYGHLSVY…KYLPYNHQHE (86 aa)) the chain is Cytoplasmic. Residues 180-184 (HDYGH) carry the Histidine box-1 motif. The short motif at 217-221 (HFQHH) is the Histidine box-2 element. A helical membrane pass occupies residues 265 to 285 (YFFLIGPPLLIPMYFQYQIIM). The Lumenal segment spans residues 286–305 (TMIVHKNWVDLAWAISYYIR). The helical transmembrane segment at 306–326 (FFVTYIPFYGILGALLFLNFI) threads the bilayer. Residues 327–444 (RFLESHWFVW…KLWLDAYLHK (118 aa)) lie on the Cytoplasmic side of the membrane. The Histidine box-3 signature appears at 382–386 (QIEHH).

It belongs to the fatty acid desaturase type 1 family.

Its subcellular location is the endoplasmic reticulum membrane. It catalyses the reaction (9Z,12Z)-octadecadienoyl-CoA + 2 Fe(II)-[cytochrome b5] + O2 + 2 H(+) = (6Z,9Z,12Z)-octadecatrienoyl-CoA + 2 Fe(III)-[cytochrome b5] + 2 H2O. The enzyme catalyses (9Z,12Z,15Z)-octadecatrienoyl-CoA + 2 Fe(II)-[cytochrome b5] + O2 + 2 H(+) = (6Z,9Z,12Z,15Z)-octadecatetraenoyl-CoA + 2 Fe(III)-[cytochrome b5] + 2 H2O. It carries out the reaction (9Z,12Z,15Z,18Z,21Z)-tetracosapentaenoyl-CoA + 2 Fe(II)-[cytochrome b5] + O2 + 2 H(+) = (6Z,9Z,12Z,15Z,18Z,21Z)-tetracosahexaenoyl-CoA + 2 Fe(III)-[cytochrome b5] + 2 H2O. The catalysed reaction is (11E)-octadecenoyl-CoA + 2 Fe(II)-[cytochrome b5] + O2 + 2 H(+) = (6Z,11E)-octadecadienoyl-CoA + 2 Fe(III)-[cytochrome b5] + 2 H2O. It catalyses the reaction (11Z,14Z)-eicosadienoyl-CoA + 2 Fe(II)-[cytochrome b5] + O2 + 2 H(+) = (8Z,11Z,14Z)-eicosatrienoyl-CoA + 2 Fe(III)-[cytochrome b5] + 2 H2O. The enzyme catalyses (11Z,14Z,17Z)-eicosatrienoyl-CoA + 2 Fe(II)-[cytochrome b5] + O2 + 2 H(+) = (8Z,11Z,14Z,17Z)-eicosatetraenoyl-CoA + 2 Fe(III)-[cytochrome b5] + 2 H2O. The protein operates within lipid metabolism; polyunsaturated fatty acid biosynthesis. Its function is as follows. Involved in the biosynthesis of highly unsaturated fatty acids (HUFA) from the essential polyunsaturated fatty acids (PUFA) linoleic acid (LA) (18:2n-6) and alpha-linolenic acid (ALA) (18:3n-3) precursors, acting as a fatty acyl-coenzyme A (CoA) desaturase that introduces a cis double bond at carbon 6 of the fatty acyl chain. Catalyzes the first and rate limiting step in this pathway which is the desaturation of LA (18:2n-6) and ALA (18:3n-3) into gamma-linoleate (GLA) (18:3n-6) and stearidonate (18:4n-3), respectively. Subsequently, in the biosynthetic pathway of HUFA n-3 series, it desaturates tetracosapentaenoate (24:5n-3) to tetracosahexaenoate (24:6n-3), which is then converted to docosahexaenoate (DHA)(22:6n-3), an important lipid for nervous system function. It can also desaturate (11E)-octadecenoate (trans-vaccenoate) at carbon 6 generating (6Z,11E)-octadecadienoate. In addition to Delta-6 activity, this enzyme exhibits Delta-8 activity with slight biases toward n-3 fatty acyl-CoA substrates. In Macaca fascicularis (Crab-eating macaque), this protein is Acyl-CoA 6-desaturase (FADS2).